Reading from the N-terminus, the 375-residue chain is Succinyl-diaminopimelate desuccinylase (375 aa).

H66 is a binding site for Zn(2+). Residue D68 is part of the active site. D99 contributes to the Zn(2+) binding site. The active-site Proton acceptor is E133. The Zn(2+) site is built by E134, E162, and H348.

It belongs to the peptidase M20A family. DapE subfamily. In terms of assembly, homodimer. The cofactor is Zn(2+). Co(2+) serves as cofactor.

It carries out the reaction N-succinyl-(2S,6S)-2,6-diaminopimelate + H2O = (2S,6S)-2,6-diaminopimelate + succinate. Its pathway is amino-acid biosynthesis; L-lysine biosynthesis via DAP pathway; LL-2,6-diaminopimelate from (S)-tetrahydrodipicolinate (succinylase route): step 3/3. Functionally, catalyzes the hydrolysis of N-succinyl-L,L-diaminopimelic acid (SDAP), forming succinate and LL-2,6-diaminopimelate (DAP), an intermediate involved in the bacterial biosynthesis of lysine and meso-diaminopimelic acid, an essential component of bacterial cell walls. The protein is Succinyl-diaminopimelate desuccinylase of Salmonella choleraesuis (strain SC-B67).